Reading from the N-terminus, the 91-residue chain is Kazal-type trypsin inhibitor (91 aa).

A signal peptide spans 1–22 (MRHIGVFVGVLALALVLLVVEA). The 54-residue stretch at 25–78 (DAERGVCACPRIYMPVCGSNLKTYNNDCLLRCEINSDLGRANNLRKIADQACDN) folds into the Kazal-like domain. Intrachain disulfides connect cysteine 31-cysteine 56, cysteine 33-cysteine 52, and cysteine 41-cysteine 76. N-linked (GlcNAc...) asparagine glycosylation occurs at asparagine 78.

In terms of assembly, interacts with human PLG (plasmin). In terms of tissue distribution, female salivary gland. Female gut at 3 and 24 hours after blood feeding. Female carcass. Male tissues. Not detected in ovary and fat body at 3 and 24 hours after blood feeding.

The protein localises to the secreted. Functionally, anticoagulant protein that decreases host thrombin (F2) activity via an uncompetitive inhibition mechanism. Inhibits amidolytic activity of host plasmin (PLG). Inhibits amidolytic activity of host trypsin. Inhibits trypsin-like endogenous activity from gut of female mosquitoes 24 hours after feeding and weakly affects enzyme activity from gut 3 hours after feeding, suggesting a possible role as an inhibitor of endogenous proteases. Its function is as follows. (Microbial infection) Limits host plasmin-mediated enhancement of dengue virus type 2 infection in mosquito midgut. The protein is Kazal-type trypsin inhibitor of Aedes aegypti (Yellowfever mosquito).